The sequence spans 351 residues: Nicotinate-nucleotide--dimethylbenzimidazole phosphoribosyltransferase (351 aa).

The active-site Proton acceptor is the glutamate 317.

It belongs to the CobT family.

The enzyme catalyses 5,6-dimethylbenzimidazole + nicotinate beta-D-ribonucleotide = alpha-ribazole 5'-phosphate + nicotinate + H(+). It participates in nucleoside biosynthesis; alpha-ribazole biosynthesis; alpha-ribazole from 5,6-dimethylbenzimidazole: step 1/2. Catalyzes the synthesis of alpha-ribazole-5'-phosphate from nicotinate mononucleotide (NAMN) and 5,6-dimethylbenzimidazole (DMB). This is Nicotinate-nucleotide--dimethylbenzimidazole phosphoribosyltransferase from Pseudomonas aeruginosa (strain UCBPP-PA14).